A 152-amino-acid chain; its full sequence is Sec-independent protein translocase protein TatB (152 aa).

Residues 1–21 form a helical membrane-spanning segment; sequence MFGISFSELLLVGLVALLVLG. The span at 98 to 115 shows a compositional bias: low complexity; it reads HAPGAATVAEAPPASEVP. The interval 98–152 is disordered; the sequence is HAPGAATVAEAPPASEVPAPLPSTPAPAPTAEPAAPVATPATTAPHDSTLPPRAP. Pro residues predominate over residues 116-127; the sequence is APLPSTPAPAPT. Low complexity predominate over residues 128-142; that stretch reads AEPAAPVATPATTAP.

It belongs to the TatB family. As to quaternary structure, the Tat system comprises two distinct complexes: a TatABC complex, containing multiple copies of TatA, TatB and TatC subunits, and a separate TatA complex, containing only TatA subunits. Substrates initially bind to the TatABC complex, which probably triggers association of the separate TatA complex to form the active translocon.

The protein localises to the cell inner membrane. Part of the twin-arginine translocation (Tat) system that transports large folded proteins containing a characteristic twin-arginine motif in their signal peptide across membranes. Together with TatC, TatB is part of a receptor directly interacting with Tat signal peptides. TatB may form an oligomeric binding site that transiently accommodates folded Tat precursor proteins before their translocation. The polypeptide is Sec-independent protein translocase protein TatB (Pseudomonas fluorescens (strain ATCC BAA-477 / NRRL B-23932 / Pf-5)).